The sequence spans 238 residues: 3,4-dihydroxy-2-butanone 4-phosphate synthase (238 aa).

D-ribulose 5-phosphate is bound by residues 26–27 (RE), Asp31, 166–170 (RVGQT), and Glu190. A Mg(2+)-binding site is contributed by Glu27.

The protein belongs to the DHBP synthase family. Homodimer. The cofactor is Mg(2+). Requires Mn(2+) as cofactor.

It carries out the reaction D-ribulose 5-phosphate = (2S)-2-hydroxy-3-oxobutyl phosphate + formate + H(+). Its pathway is cofactor biosynthesis; riboflavin biosynthesis; 2-hydroxy-3-oxobutyl phosphate from D-ribulose 5-phosphate: step 1/1. Catalyzes the conversion of D-ribulose 5-phosphate to formate and 3,4-dihydroxy-2-butanone 4-phosphate. In Archaeoglobus fulgidus (strain ATCC 49558 / DSM 4304 / JCM 9628 / NBRC 100126 / VC-16), this protein is 3,4-dihydroxy-2-butanone 4-phosphate synthase.